Reading from the N-terminus, the 255-residue chain is 4-diphosphocytidyl-2-C-methyl-D-erythritol kinase (255 aa).

K9 is an active-site residue. 95-105 (PSQAGLGGGSS) serves as a coordination point for ATP. D137 is a catalytic residue.

The protein belongs to the GHMP kinase family. IspE subfamily.

The catalysed reaction is 4-CDP-2-C-methyl-D-erythritol + ATP = 4-CDP-2-C-methyl-D-erythritol 2-phosphate + ADP + H(+). The protein operates within isoprenoid biosynthesis; isopentenyl diphosphate biosynthesis via DXP pathway; isopentenyl diphosphate from 1-deoxy-D-xylulose 5-phosphate: step 3/6. Its function is as follows. Catalyzes the phosphorylation of the position 2 hydroxy group of 4-diphosphocytidyl-2C-methyl-D-erythritol. This chain is 4-diphosphocytidyl-2-C-methyl-D-erythritol kinase, found in Sulfurovum sp. (strain NBC37-1).